The primary structure comprises 281 residues: Pantothenate synthetase (281 aa).

ATP is bound at residue 30–37; that stretch reads MGYLHEGH. Catalysis depends on H37, which acts as the Proton donor. Q61 is a (R)-pantoate binding site. Beta-alanine is bound at residue Q61. Residue 147-150 participates in ATP binding; that stretch reads GEKD. Q153 contributes to the (R)-pantoate binding site. ATP-binding positions include I176 and 184–187; that span reads KSSR.

The protein belongs to the pantothenate synthetase family. Homodimer.

It is found in the cytoplasm. The catalysed reaction is (R)-pantoate + beta-alanine + ATP = (R)-pantothenate + AMP + diphosphate + H(+). The protein operates within cofactor biosynthesis; (R)-pantothenate biosynthesis; (R)-pantothenate from (R)-pantoate and beta-alanine: step 1/1. Functionally, catalyzes the condensation of pantoate with beta-alanine in an ATP-dependent reaction via a pantoyl-adenylate intermediate. The chain is Pantothenate synthetase from Clostridium botulinum (strain 657 / Type Ba4).